Here is a 144-residue protein sequence, read N- to C-terminus: MESKEYRKLEYNYKAFLIFSKVAMLTFLTVGIGAIFTPQTYPIMPTIGFIVVAGIVSLIGMTIGALIIHQQYETLPANEKLEFKQKLLPEAYYICIELFGYGSLVLLYNTFTSNNPTLCVMSLLMAGLFILVVLVIWYFGYKSY.

Transmembrane regions (helical) follow at residues 16-36 (FLIF…GAIF), 48-68 (GFIV…ALII), 87-107 (LLPE…LVLL), and 120-140 (VMSL…WYFG).

It is found in the cell membrane. This is an uncharacterized protein from Methanocaldococcus jannaschii (strain ATCC 43067 / DSM 2661 / JAL-1 / JCM 10045 / NBRC 100440) (Methanococcus jannaschii).